The primary structure comprises 292 residues: ATP synthase gamma chain (292 aa).

It belongs to the ATPase gamma chain family. F-type ATPases have 2 components, CF(1) - the catalytic core - and CF(0) - the membrane proton channel. CF(1) has five subunits: alpha(3), beta(3), gamma(1), delta(1), epsilon(1). CF(0) has three main subunits: a, b and c.

The protein resides in the cell inner membrane. Functionally, produces ATP from ADP in the presence of a proton gradient across the membrane. The gamma chain is believed to be important in regulating ATPase activity and the flow of protons through the CF(0) complex. The polypeptide is ATP synthase gamma chain (Brucella anthropi (strain ATCC 49188 / DSM 6882 / CCUG 24695 / JCM 21032 / LMG 3331 / NBRC 15819 / NCTC 12168 / Alc 37) (Ochrobactrum anthropi)).